A 79-amino-acid chain; its full sequence is Small ribosomal subunit protein bS18 (79 aa).

This sequence belongs to the bacterial ribosomal protein bS18 family. In terms of assembly, part of the 30S ribosomal subunit. Forms a tight heterodimer with protein bS6.

Functionally, binds as a heterodimer with protein bS6 to the central domain of the 16S rRNA, where it helps stabilize the platform of the 30S subunit. The protein is Small ribosomal subunit protein bS18 of Onion yellows phytoplasma (strain OY-M).